A 314-amino-acid chain; its full sequence is Glutamyl-Q tRNA(Asp) synthetase (314 aa).

Residues 14–18 (RFAPS) and Glu50 each bind L-glutamate. A 'HIGH' region motif is present at residues 17 to 27 (PSPTGPLHVGS). Cys106, Cys108, Tyr129, and Cys133 together coordinate Zn(2+). Residues Tyr187 and Arg205 each contribute to the L-glutamate site. A 'KMSKS' region motif is present at residues 243 to 247 (KLSKR). Lys246 contacts ATP.

The protein belongs to the class-I aminoacyl-tRNA synthetase family. GluQ subfamily. Zn(2+) serves as cofactor.

Functionally, catalyzes the tRNA-independent activation of glutamate in presence of ATP and the subsequent transfer of glutamate onto a tRNA(Asp). Glutamate is transferred on the 2-amino-5-(4,5-dihydroxy-2-cyclopenten-1-yl) moiety of the queuosine in the wobble position of the QUC anticodon. This Geobacter sulfurreducens (strain ATCC 51573 / DSM 12127 / PCA) protein is Glutamyl-Q tRNA(Asp) synthetase.